Consider the following 434-residue polypeptide: Cytochrome b-c1 complex subunit 2, mitochondrial (434 aa).

The N-terminal 31 residues, 1–31, are a transit peptide targeting the mitochondrion; that stretch reads MYSLNRLPRSAAFKSSANLLRRNASTTSAGG.

This sequence belongs to the peptidase M16 family. UQCRC2/QCR2 subfamily. In terms of assembly, component of the ubiquinol-cytochrome c oxidoreductase (cytochrome b-c1 complex, complex III, CIII), a multisubunit enzyme composed of 10 subunits. The complex is composed of 3 respiratory subunits cytochrome b (COB), cytochrome c1 (CYT1) and Rieske protein (RIP1), 2 core protein subunits COR1 and QCR2, and 5 low-molecular weight protein subunits QCR6, QCR7, QCR8, QCR9 and QCR10. The complex exists as an obligatory dimer and forms supercomplexes (SCs) in the inner mitochondrial membrane with a monomer or a dimer of cytochrome c oxidase (complex IV, CIV), resulting in 2 different assemblies (supercomplexes III(2)IV and III(2)IV(2)). Interacts with MRJ1.

It localises to the mitochondrion inner membrane. In terms of biological role, component of the ubiquinol-cytochrome c oxidoreductase, a multisubunit transmembrane complex that is part of the mitochondrial electron transport chain which drives oxidative phosphorylation. The respiratory chain contains 3 multisubunit complexes succinate dehydrogenase (complex II, CII), ubiquinol-cytochrome c oxidoreductase (cytochrome b-c1 complex, complex III, CIII) and cytochrome c oxidase (complex IV, CIV), that cooperate to transfer electrons derived from NADH and succinate to molecular oxygen, creating an electrochemical gradient over the inner membrane that drives transmembrane transport and the ATP synthase. The cytochrome b-c1 complex catalyzes electron transfer from ubiquinol to cytochrome c, linking this redox reaction to translocation of protons across the mitochondrial inner membrane, with protons being carried across the membrane as hydrogens on the quinol. In the process called Q cycle, 2 protons are consumed from the matrix, 4 protons are released into the intermembrane space and 2 electrons are passed to cytochrome c. This chain is Cytochrome b-c1 complex subunit 2, mitochondrial, found in Cryptococcus neoformans var. grubii serotype A (strain H99 / ATCC 208821 / CBS 10515 / FGSC 9487) (Filobasidiella neoformans var. grubii).